Reading from the N-terminus, the 132-residue chain is Glycine cleavage system H protein (132 aa).

The Lipoyl-binding domain occupies 24–106 (RVRVGITDYA…YGAGWLFELE (83 aa)). Lys-65 bears the N6-lipoyllysine mark.

It belongs to the GcvH family. In terms of assembly, the glycine cleavage system is composed of four proteins: P, T, L and H. (R)-lipoate is required as a cofactor.

Functionally, the glycine cleavage system catalyzes the degradation of glycine. The H protein shuttles the methylamine group of glycine from the P protein to the T protein. The chain is Glycine cleavage system H protein from Nocardia farcinica (strain IFM 10152).